The sequence spans 156 residues: Small ribosomal subunit protein uS7 (156 aa).

The protein belongs to the universal ribosomal protein uS7 family. Part of the 30S ribosomal subunit. Contacts proteins S9 and S11.

One of the primary rRNA binding proteins, it binds directly to 16S rRNA where it nucleates assembly of the head domain of the 30S subunit. Is located at the subunit interface close to the decoding center, probably blocks exit of the E-site tRNA. This Actinobacillus succinogenes (strain ATCC 55618 / DSM 22257 / CCUG 43843 / 130Z) protein is Small ribosomal subunit protein uS7.